A 152-amino-acid polypeptide reads, in one-letter code: SsrA-binding protein (152 aa).

This sequence belongs to the SmpB family.

It localises to the cytoplasm. Functionally, required for rescue of stalled ribosomes mediated by trans-translation. Binds to transfer-messenger RNA (tmRNA), required for stable association of tmRNA with ribosomes. tmRNA and SmpB together mimic tRNA shape, replacing the anticodon stem-loop with SmpB. tmRNA is encoded by the ssrA gene; the 2 termini fold to resemble tRNA(Ala) and it encodes a 'tag peptide', a short internal open reading frame. During trans-translation Ala-aminoacylated tmRNA acts like a tRNA, entering the A-site of stalled ribosomes, displacing the stalled mRNA. The ribosome then switches to translate the ORF on the tmRNA; the nascent peptide is terminated with the 'tag peptide' encoded by the tmRNA and targeted for degradation. The ribosome is freed to recommence translation, which seems to be the essential function of trans-translation. The protein is SsrA-binding protein of Rickettsia akari (strain Hartford).